The sequence spans 1784 residues: Sodium channel protein type 4 subunit alpha B (1784 aa).

Over 1–130 (MARLLPPTGT…RAAIRILIHS (130 aa)) the chain is Cytoplasmic. Residues 29–48 (AEEAAEQERMKEQNVKVAEE) are disordered. An I repeat occupies 112–429 (CLSPFNPVRR…VVAMAYAEQN (318 aa)). The helical transmembrane segment at 131–149 (LFSLVIMLTILTNCVFMAM) threads the bilayer. The Extracellular segment spans residues 150–156 (SDPPGWS). The chain crosses the membrane as a helical span at residues 157 to 177 (KILEYVFTGIYTFEAMVKVLS). The Cytoplasmic segment spans residues 178 to 191 (RGFCIGDFTFLRDP). Residues 192 to 209 (WNWLDFMVISMAYLTEFV) traverse the membrane as a helical segment. Topologically, residues 210-215 (DLGNIS) are extracellular. N-linked (GlcNAc...) asparagine glycosylation is present at Asn-213. Residues 216–232 (ALRTFRVLRALKTITVI) form a helical membrane-spanning segment. Residues 233-251 (PGLKTIVGALIQSVKKLAD) lie on the Cytoplasmic side of the membrane. The chain crosses the membrane as a helical span at residues 252–271 (VMILTVFCLSVFALIGLQLF). Residues 272 to 366 (MGNLRQKCVL…PNYGYTSYDN (95 aa)) lie on the Extracellular side of the membrane. Residues Cys-279 and Cys-335 are joined by a disulfide bond. Residues Asn-291, Asn-304, and Asn-337 are each glycosylated (N-linked (GlcNAc...) asparagine). Cys-344 and Cys-350 are disulfide-bonded. The pore-forming intramembrane region spans 367 to 391 (FGWAFLALFRLMTQDFWENLFQLTL). Topologically, residues 392 to 398 (RAAGKTY) are extracellular. Residues 399–419 (MIFFVVIIFLGSFYLINLILA) form a helical membrane-spanning segment. The Cytoplasmic segment spans residues 420–568 (VVAMAYAEQN…RIVYLFVMDP (149 aa)). The interval 455–478 (EQKNGMVNGSKTSLSSKKKGDNDQ) is disordered. One copy of the II repeat lies at 550–821 (CCIPWVKFKR…QIAISRITRG (272 aa)). A helical transmembrane segment spans residues 569 to 587 (FVDLGITLCIVLNTVFMAM). Residues 588-598 (EHYPMSVHVEE) are Extracellular-facing. The helical transmembrane segment at 599-618 (VLAIGNLVFTGIFAAEMVLK) threads the bilayer. The Cytoplasmic segment spans residues 619–632 (LIALDPYYYFQVGW). Residues 633-652 (NIFDSIIVTMSLVELMLADV) traverse the membrane as a helical segment. Topologically, residues 653 to 654 (EG) are extracellular. Residues 655–672 (LSVLRSFRLMRVFKLAKS) traverse the membrane as a helical segment. Residues 673–688 (WPTLNMLIKIIGNSVG) lie on the Cytoplasmic side of the membrane. A helical transmembrane segment spans residues 689–707 (ALGNLTLVLAIIVFIFAVV). The Extracellular segment spans residues 708 to 736 (GMQLFGKSYTDSVCKISSDCELPRWHMAD). Cys-721 and Cys-727 are disulfide-bonded. The pore-forming intramembrane region spans 737-757 (FFHAFLIIFRVLCGEWIETMW). Residues 758–768 (DCMEVAGQGMC) are Extracellular-facing. The cysteines at positions 759 and 768 are disulfide-linked. A helical transmembrane segment spans residues 769-787 (IIVFMMVMVIGNLVVLNLF). The Cytoplasmic segment spans residues 788–973 (LALLLSSFSG…TCFAIVEHSY (186 aa)). The interval 870–928 (PIANGESDDDDGNGSSEDEDDEGRDINMKKKNGDESSTCSTVDKPPEVEDLVEEEEEDL) is disordered. Residues 875-892 (ESDDDDGNGSSEDEDDEG) are compositionally biased toward acidic residues. The span at 893–903 (RDINMKKKNGD) shows a compositional bias: basic and acidic residues. The span at 917-928 (VEDLVEEEEEDL) shows a compositional bias: acidic residues. The stretch at 954-1269 (KGKAWWNFRK…KKYYNAMKKL (316 aa)) is one III repeat. A helical membrane pass occupies residues 974 to 991 (FETFIIFMILLSSGALAF). The Extracellular portion of the chain corresponds to 992-1004 (EDIYIEQRRMIKI). A helical membrane pass occupies residues 1005–1023 (ILEYADQVFTYVFVVEMLL). Over 1024 to 1037 (KWVAYGFKVYFTNA) the chain is Cytoplasmic. A helical transmembrane segment spans residues 1038–1056 (WCWLDFLIVDVSLISLTAN). Residues 1057–1064 (ILGYSELG) are Extracellular-facing. Residues 1065-1083 (AIKSLRTLRALRPLRALSR) traverse the membrane as a helical segment. Over 1084 to 1101 (FEGMRVVVVNALVGAIPS) the chain is Cytoplasmic. The chain crosses the membrane as a helical span at residues 1102–1121 (IFNVLLVCLIFWLIFSIMGV). Topologically, residues 1122–1173 (NLFAGKFYYCFNETSEEVFDHNVVNNKTDCYELMEFHPEVRWMNGKINFDNV) are extracellular. Cys-1131 and Cys-1151 are disulfide-bonded. 2 N-linked (GlcNAc...) asparagine glycosylation sites follow: Asn-1133 and Asn-1147. The pore-forming intramembrane region spans 1174–1195 (GMGYLALLQVATFKGWMDIMYS). Residues 1196–1212 (AVDSRAIESQPVYEANL) are Extracellular-facing. Residues 1213-1234 (YMYIYFVIFIIFGSFFTLNLFI) form a helical membrane-spanning segment. At 1235–1297 (GVIIDNFNQQ…LVFDFVTQQF (63 aa)) the chain is on the cytoplasmic side. Residues 1253-1255 (IFM) are important for rapid channel inactivation. The IV repeat unit spans residues 1278 to 1575 (IPRPTNCCQG…WEKFDPTASQ (298 aa)). Residues 1298–1315 (FDIFIMVMICLNMVTMMV) traverse the membrane as a helical segment. Residues 1316-1326 (ETDDQSAEIEE) lie on the Extracellular side of the membrane. The chain crosses the membrane as a helical span at residues 1327-1345 (ILFYINFAFIILFTGECVL). At 1346–1357 (KITALRYHYFSI) the chain is on the cytoplasmic side. A helical membrane pass occupies residues 1358–1375 (GWNIFDFVVVILSILGIG). Residues 1376–1388 (LADLIEKYFVSPT) lie on the Extracellular side of the membrane. Residues 1389 to 1405 (LFRVIRLARIGRVLRLI) traverse the membrane as a helical segment. Over 1406 to 1424 (RGAKGIRTLLFALMMSLPA) the chain is Cytoplasmic. A helical transmembrane segment spans residues 1425–1442 (LFNIGLLLFLIMFIFSIF). Over 1443–1464 (GMSNFAYVKKEVGIDDMMNFET) the chain is Extracellular. Positions 1465 to 1487 (FGNSIICMFMITTSAGWDGLLAP) form an intramembrane region, pore-forming. At 1488–1516 (ILNSPPDCDPDVDNPGSTTRGNCGNAAVG) the chain is on the extracellular side. Cys-1495 and Cys-1510 are oxidised to a cystine. A helical transmembrane segment spans residues 1517-1539 (IVFFCSYIVMSFLVVVNMYIAII). Topologically, residues 1540-1784 (LENFNVATEE…AADNLRESIV (245 aa)) are cytoplasmic. Residues 1669 to 1698 (EEVAASTIQRAYRSHILKRCVKQASYMYRD) enclose the IQ domain.

The protein belongs to the sodium channel (TC 1.A.1.10) family. Nav1.4/SCN4A subfamily. In terms of assembly, voltage-gated sodium (Nav) channels consist of an ion-conducting alpha subunit which is functional on its own associated with regulatory beta subunits. Post-translationally, lacks the cysteine which covalently binds the conotoxin GVIIJ. This cysteine (position 719) is speculated in other sodium channel subunits alpha to be implied in covalent binding with the sodium channel subunit beta-2 or beta-4. In terms of tissue distribution, expressed in skeletal muscle, heart, brain, spinal cord, and eye.

The protein localises to the cell membrane. It catalyses the reaction Na(+)(in) = Na(+)(out). Pore-forming subunit of a voltage-gated sodium (Nav) channel that directly mediates the depolarizing phase of action potentials in excitable membranes. Navs, also called VGSCs (voltage-gated sodium channels) or VDSCs (voltage-dependent sodium channels), operate by switching between closed and open conformations depending on the voltage difference across the membrane. In the open conformation they allow Na(+) ions to selectively pass through the pore, along their electrochemical gradient. The influx of Na+ ions provokes membrane depolarization, initiating the propagation of electrical signals throughout cells and tissues. This chain is Sodium channel protein type 4 subunit alpha B (scn4ab), found in Danio rerio (Zebrafish).